A 246-amino-acid polypeptide reads, in one-letter code: Proteasome subunit beta type-4 (246 aa).

Residues 1–23 constitute a propeptide that is removed on maturation; it reads MTTFSVPIDNGDSMKIAEEESQR. Thr24 acts as the Nucleophile in catalysis.

This sequence belongs to the peptidase T1B family. Component of the 20S core complex of the 26S proteasome. The 26S proteasome is composed of a core protease (CP), known as the 20S proteasome, capped at one or both ends by the 19S regulatory particle (RP/PA700). The 20S proteasome core is composed of 28 subunits that are arranged in four stacked rings, resulting in a barrel-shaped structure. The two end rings are each formed by seven alpha subunits, and the two central rings are each formed by seven beta subunits. The catalytic chamber with the active sites is on the inside of the barrel. As to expression, ubiquitous low levels, higher expression in siliques and flowers.

It is found in the cytoplasm. Its subcellular location is the nucleus. In terms of biological role, non-catalytic component of the proteasome, a multicatalytic proteinase complex which is characterized by its ability to cleave peptides with Arg, Phe, Tyr, Leu, and Glu adjacent to the leaving group at neutral or slightly basic pH. The proteasome has an ATP-dependent proteolytic activity. This chain is Proteasome subunit beta type-4 (PBG1), found in Arabidopsis thaliana (Mouse-ear cress).